The chain runs to 464 residues: NADH-quinone oxidoreductase subunit N 2 (464 aa).

14 helical membrane passes run 12-32 (VGIIFLIILELFLPSFDLIGF), 33-53 (LGFLISFISGVLAIKYSLAGY), 62-82 (INAFSLLLKGVMYILTSFVIF), 93-113 (TFVENVYTFLLISLGLSIMVS), 117-137 (LAVILAGLELASISMYISVGM), 152-172 (LVLGSMTTAFFGIGSAFYIGA), 189-209 (FALASLFLFVAFALKVSAAPF), 227-247 (FISTVPKIGFYAVLFLLASYI), 254-274 (FSYIVGIVGVISMFWGNLVAY), 282-304 (MLAYSSIGHAGYFLIGFSRYNPL), 310-330 (IFYVIVYAFATAGAFLVLSIL), 351-371 (PFLATALALFLFALIGIPPFA), 400-420 (IIAAGYYLKLIVYMFFKEPAT), and 434-454 (IGISAFLIIVFFFGIFPNILF).

The protein belongs to the complex I subunit 2 family. NDH-1 is composed of 14 different subunits. Subunits NuoA, H, J, K, L, M, N constitute the membrane sector of the complex.

It localises to the cell inner membrane. The enzyme catalyses a quinone + NADH + 5 H(+)(in) = a quinol + NAD(+) + 4 H(+)(out). Functionally, NDH-1 shuttles electrons from NADH, via FMN and iron-sulfur (Fe-S) centers, to quinones in the respiratory chain. The immediate electron acceptor for the enzyme in this species is believed to be ubiquinone. Couples the redox reaction to proton translocation (for every two electrons transferred, four hydrogen ions are translocated across the cytoplasmic membrane), and thus conserves the redox energy in a proton gradient. This Hydrogenobaculum sp. (strain Y04AAS1) protein is NADH-quinone oxidoreductase subunit N 2.